We begin with the raw amino-acid sequence, 258 residues long: uncharacterized protein (258 aa).

The next 5 helical transmembrane spans lie at 14–34 (LAFP…LAAI), 53–73 (VIIW…YFFV), 110–130 (AALC…WLAL), 185–205 (GLAL…GIIF), and 238–258 (GINT…AQLI).

Belongs to the TMEM19 family.

The protein resides in the cell membrane. This is an uncharacterized protein from Synechocystis sp. (strain ATCC 27184 / PCC 6803 / Kazusa).